The primary structure comprises 432 residues: Transcriptional adapter 3-A (432 aa).

2 disordered regions span residues 90-127 (HELG…RNMQ) and 275-314 (SPVE…TKSL). Polar residues predominate over residues 293 to 305 (DGASTSPRSQNKP). Residues 335 to 398 (ADDSEDEVLA…NEVMDAFRKI (64 aa)) adopt a coiled-coil conformation.

It belongs to the NGG1 family.

It localises to the nucleus. Functions as a component of the PCAF complex. The PCAF complex is capable of efficiently acetylating histones in a nucleosomal context. The polypeptide is Transcriptional adapter 3-A (tada3-a) (Xenopus laevis (African clawed frog)).